A 149-amino-acid chain; its full sequence is Pleckstrin homology domain-containing family J member 1 (149 aa).

Positions 15–108 constitute a PH domain; it reads RAEKAAELSM…WVEALTNASY (94 aa).

In Xenopus tropicalis (Western clawed frog), this protein is Pleckstrin homology domain-containing family J member 1 (plekhj1).